The sequence spans 173 residues: Cyclic pyranopterin monophosphate synthase (173 aa).

Residues 75–77 (MCH) and 117–118 (ME) contribute to the substrate site. Residue D132 is part of the active site. Residues 152–173 (SGGKSGHYQRENSSVGGFANEQ) form a disordered region. The segment covering 162–173 (ENSSVGGFANEQ) has biased composition (polar residues).

Belongs to the MoaC family. As to quaternary structure, homohexamer; trimer of dimers.

The catalysed reaction is (8S)-3',8-cyclo-7,8-dihydroguanosine 5'-triphosphate = cyclic pyranopterin phosphate + diphosphate. It participates in cofactor biosynthesis; molybdopterin biosynthesis. In terms of biological role, catalyzes the conversion of (8S)-3',8-cyclo-7,8-dihydroguanosine 5'-triphosphate to cyclic pyranopterin monophosphate (cPMP). This is Cyclic pyranopterin monophosphate synthase from Geobacillus sp. (strain WCH70).